We begin with the raw amino-acid sequence, 607 residues long: Coronin-like protein cor-1 (607 aa).

WD repeat units follow at residues 77 to 117 (AHKA…LNRN), 127 to 167 (GHQK…ALLE), and 170 to 209 (GHPD…VVHE). The interval 415 to 564 (PTAAESVPTQ…VSAASDVGHV (150 aa)) is disordered. The span at 424–436 (QSYSERPPSSQQP) shows a compositional bias: low complexity. The segment covering 437 to 447 (SPRPSASPRPR) has biased composition (pro residues). Basic and acidic residues-rich tracts occupy residues 473–489 (SRTE…DPMK) and 517–533 (AAAE…RTAD). Positions 544–559 (SSRASASPRGSVSAAS) are enriched in low complexity. Positions 563 to 602 (HVPQNMDELLEDLMKMKAVLRQHERRIRMLEEEIADRNMS) form a coiled coil.

Belongs to the WD repeat coronin family.

It localises to the cytoplasm. It is found in the cytoskeleton. Required to direct the migration of Q neuroblasts along the anterior axis of the body during larval development. This is dependent on its asymmetric expression in Q neuroblasts. This chain is Coronin-like protein cor-1 (cor-1), found in Caenorhabditis elegans.